We begin with the raw amino-acid sequence, 138 residues long: ATP synthase epsilon chain (138 aa).

It belongs to the ATPase epsilon chain family. In terms of assembly, F-type ATPases have 2 components, CF(1) - the catalytic core - and CF(0) - the membrane proton channel. CF(1) has five subunits: alpha(3), beta(3), gamma(1), delta(1), epsilon(1). CF(0) has four main subunits: a(1), b(1), b'(1) and c(9-12).

The protein resides in the cellular thylakoid membrane. Functionally, produces ATP from ADP in the presence of a proton gradient across the membrane. The complex from the organism is particularly stable to disruption and remains functional after 6 hours at 55 degrees Celsius. The protein is ATP synthase epsilon chain of Thermosynechococcus vestitus (strain NIES-2133 / IAM M-273 / BP-1).